Here is a 415-residue protein sequence, read N- to C-terminus: Glycerate 2-kinase (415 aa).

K57 provides a ligand contact to substrate.

It belongs to the glycerate kinase type-1 family. As to quaternary structure, homodimer. Mg(2+) serves as cofactor. The cofactor is Ni(2+). It depends on Mn(2+) as a cofactor. Requires Co(2+) as cofactor.

The enzyme catalyses (R)-glycerate + ATP = (2R)-2-phosphoglycerate + ADP + H(+). In terms of biological role, catalyzes the ATP-dependent phosphorylation of D-glycerate to 2-phosphoglycerate. It can also partially utilize GTP, CTP or UTP as phosphate donor. In Picrophilus torridus (strain ATCC 700027 / DSM 9790 / JCM 10055 / NBRC 100828 / KAW 2/3), this protein is Glycerate 2-kinase (gck).